Here is a 426-residue protein sequence, read N- to C-terminus: Cytochrome b-c1 complex subunit 2, mitochondrial (426 aa).

The transit peptide at 1–30 (MKSFTRNLRRFQTPRRNLHGISYTPKKVEG) directs the protein to the mitochondrion.

Belongs to the peptidase M16 family. UQCRC2/QCR2 subfamily. Component of the ubiquinol-cytochrome c oxidoreductase (cytochrome b-c1 complex, complex III, CIII), a multisubunit enzyme composed of 3 respiratory subunits cytochrome b, cytochrome c1 and Rieske protein, 2 core protein subunits, and additional low-molecular weight protein subunits. The complex exists as an obligatory dimer and forms supercomplexes (SCs) in the inner mitochondrial membrane with cytochrome c oxidase (complex IV, CIV).

It is found in the mitochondrion inner membrane. Component of the ubiquinol-cytochrome c oxidoreductase, a multisubunit transmembrane complex that is part of the mitochondrial electron transport chain which drives oxidative phosphorylation. The respiratory chain contains 3 multisubunit complexes succinate dehydrogenase (complex II, CII), ubiquinol-cytochrome c oxidoreductase (cytochrome b-c1 complex, complex III, CIII) and cytochrome c oxidase (complex IV, CIV), that cooperate to transfer electrons derived from NADH and succinate to molecular oxygen, creating an electrochemical gradient over the inner membrane that drives transmembrane transport and the ATP synthase. The cytochrome b-c1 complex catalyzes electron transfer from ubiquinol to cytochrome c, linking this redox reaction to translocation of protons across the mitochondrial inner membrane, with protons being carried across the membrane as hydrogens on the quinol. In the process called Q cycle, 2 protons are consumed from the matrix, 4 protons are released into the intermembrane space and 2 electrons are passed to cytochrome c. This Schizosaccharomyces pombe (strain 972 / ATCC 24843) (Fission yeast) protein is Cytochrome b-c1 complex subunit 2, mitochondrial (qcr2).